Reading from the N-terminus, the 370-residue chain is Cathepsin B-like cysteine proteinase 3 (370 aa).

A signal peptide spans Met-1–Ala-16. Positions Phe-17–Pro-91 are excised as a propeptide. 6 cysteine pairs are disulfide-bonded: Cys-105-Cys-134, Cys-117-Cys-162, Cys-153-Cys-210, Cys-154-Cys-158, Cys-190-Cys-214, and Cys-198-Cys-202. Cys-120 is an active-site residue. N-linked (GlcNAc...) asparagine glycosylation occurs at Asn-138. Residues His-284 and Asn-304 contribute to the active site.

It belongs to the peptidase C1 family.

The chain is Cathepsin B-like cysteine proteinase 3 (cpr-3) from Caenorhabditis elegans.